We begin with the raw amino-acid sequence, 211 residues long: UPF0056 membrane protein YvbG (211 aa).

6 helical membrane passes run Met1–Gly21, Ile47–Phe67, Ile69–Leu89, Ile114–Met134, Met150–Ile170, and Leu188–Val208.

Belongs to the UPF0056 (MarC) family.

The protein localises to the cell membrane. This is UPF0056 membrane protein YvbG (yvbG) from Bacillus subtilis (strain 168).